A 426-amino-acid polypeptide reads, in one-letter code: Synaptotagmin-13 (426 aa).

Residues 1-6 (MVLSVP) are Vesicular-facing. Residues 7 to 29 (VIALGATLGTATSILALCGVTCL) form a helical membrane-spanning segment. Residues 30–426 (CRHMHPKKGL…QIAMWHQLHL (397 aa)) lie on the Cytoplasmic side of the membrane. C2 domains follow at residues 158-275 (QAPK…AQWG) and 287-422 (GTGE…AMWH).

It belongs to the synaptotagmin family. As to quaternary structure, interacts with NRXN1. As to expression, expressed in brain, spleen, kidney and testis.

Its subcellular location is the membrane. Functionally, may be involved in transport vesicle docking to the plasma membrane. In Rattus norvegicus (Rat), this protein is Synaptotagmin-13 (Syt13).